Consider the following 983-residue polypeptide: Poly [ADP-ribose] polymerase 1 (983 aa).

2 PARP-type zinc fingers span residues 8–91 and 114–194; these read WRAE…ESGA and YGIE…KKAL. The Zn(2+) site is built by Cys-20, Cys-23, His-52, Cys-55, Cys-126, Cys-129, His-156, and Cys-159. A disordered region spans residues 197–246; that stretch reads AKTETAEARQTNSRAGTKRKNDSVDNEKSKLAKSSFDMSTSGALQPCSKE. A compositionally biased stretch (basic and acidic residues) spans 215–226; sequence RKNDSVDNEKSK. Positions 236–375 constitute a PADR1 zinc-binding domain; it reads TSGALQPCSK…SVKPKRILRP (140 aa). The tract at residues 301 to 345 is zinc ribbon; sequence GPLALCPMCSGHLSFSGGLYRCHGYISEWSKCSHSTLDPDRIKGK. Zn(2+) contacts are provided by Cys-306, Cys-309, Cys-322, and Cys-332. A disordered region spans residues 369–397; sequence PKRILRPVLSGETSQGQGSKDATDSSRSE. Residues 379–388 are compositionally biased toward polar residues; the sequence is GETSQGQGSK. Residues 394 to 484 enclose the BRCT domain; sequence SRSERLADLK…RKLPFDKYKI (91 aa). In terms of domain architecture, WGR spans 511-611; sequence HCHILEDGNS…TNFQKQPGKF (101 aa). Residues 633 to 751 form the PARP alpha-helical domain; sequence SSNLAPSLIE…DIEIASRIVG (119 aa). A PARP catalytic domain is found at 758–983; it reads ESLDDKYKKL…LLKVRFKHKR (226 aa).

This sequence belongs to the ARTD/PARP family.

The protein resides in the nucleus. The catalysed reaction is NAD(+) + (ADP-D-ribosyl)n-acceptor = nicotinamide + (ADP-D-ribosyl)n+1-acceptor + H(+).. It carries out the reaction L-aspartyl-[protein] + NAD(+) = 4-O-(ADP-D-ribosyl)-L-aspartyl-[protein] + nicotinamide. It catalyses the reaction L-glutamyl-[protein] + NAD(+) = 5-O-(ADP-D-ribosyl)-L-glutamyl-[protein] + nicotinamide. Its function is as follows. Involved in the base excision repair (BER) pathway, by catalyzing the poly(ADP-ribosyl)ation of a limited number of acceptor proteins involved in chromatin architecture and in DNA metabolism. This modification follows DNA damages and appears as an obligatory step in a detection/signaling pathway leading to the reparation of DNA strand breaks. The protein is Poly [ADP-ribose] polymerase 1 (PARP1) of Arabidopsis thaliana (Mouse-ear cress).